Reading from the N-terminus, the 921-residue chain is GID complex subunit 5 (921 aa).

Residue serine 226 is modified to Phosphoserine. ARM repeat units follow at residues 491–530 (VSAL…DFMK), 551–592 (SNLQ…RIAL), 617–656 (NEEK…NLTC), 683–725 (KISI…NLAA), and 729–777 (NKKQ…NLLW). A disordered region spans residues 822–867 (SRGKYYDEPDGDDSSSNANDDEDDDNDEGDDEGDEFVRTPAAKGST). Residues 829 to 855 (EPDGDDSSSNANDDEDDDNDEGDDEGD) show a composition bias toward acidic residues.

Belongs to the VID28/GID5 family. As to quaternary structure, identified in the GID/CTLH complex. In the absence of stress, the complex exists as an inactive anticipatory complex (GID(Ant)), composed of VID30/GID1, the E3 ubiquitin-ligase RMD5/GID2, VID28/GID5, GID8, and the RING-like subunit FYV10/GID9, awaiting a substrate receptor to form the active E3 ligase complex. When cells are shifted to glucose-containing medium, the substrate receptor VID24/GID4 is induced and becomes part of the complex, named GID(SR4). Additionally, GID7 transforms the GID(SR4) E3 ligase core into a higher-order supramolecular assembly (Chelator-GID(SR4)) specifically tailored for FBP1 ubiquitination. Under osmotic or heat stress, the substrate receptor GID10 is induced and becomes part of the complex, named GID(SR10). Within the GID complex, interacts directly with RMD5/GID2 and FYV10/GID9, and recruits VID24/GID4 to the complex when cells are shifted to glucose-containing medium.

Its subcellular location is the nucleus. The protein resides in the cytoplasm. In terms of biological role, component of the GID E3 ligase complex recruiting N termini and catalyzing ubiquitination of proteins targeted for degradation. GID E3 is regulated through assembly with interchangeable N-degron-binding substrate receptors induced by distinct environmental perturbations. Required for the adaptation to the presence of glucose in the growth medium; mediates in association with the substrate receptor VID24/GID4 the degradation of enzymes involved in gluconeogenesis when cells are shifted to glucose-containing medium. Required for proteasome-dependent catabolite degradation of fructose-1,6-bisphosphatase (FBP1), malate dehydrogenase (MDH2), and other gluconeogenic enzymes. In Saccharomyces cerevisiae (strain ATCC 204508 / S288c) (Baker's yeast), this protein is GID complex subunit 5.